Reading from the N-terminus, the 435-residue chain is Bifunctional protein GlmU (435 aa).

The tract at residues 1-224 (MNDTSIIILA…EQNFMGINDK (224 aa)) is pyrophosphorylase. UDP-N-acetyl-alpha-D-glucosamine is bound by residues 9 to 12 (LAAG), Lys-23, Gln-75, and 82 to 83 (GT). A Mg(2+)-binding site is contributed by Asp-103. The UDP-N-acetyl-alpha-D-glucosamine site is built by Gly-136, Glu-150, Asn-165, and Asn-222. Position 222 (Asn-222) interacts with Mg(2+). The interval 225–245 (FQLSVAEKIMQDEIKQDLMKA) is linker. Residues 246–435 (GVLMRLPESI…KFFGKNNAEK (190 aa)) are N-acetyltransferase. Arg-309 and Lys-326 together coordinate UDP-N-acetyl-alpha-D-glucosamine. His-337 (proton acceptor) is an active-site residue. Tyr-340 and Asn-351 together coordinate UDP-N-acetyl-alpha-D-glucosamine. Residues 360-361 (NY), Ser-379, Ala-397, and Arg-414 each bind acetyl-CoA.

This sequence in the N-terminal section; belongs to the N-acetylglucosamine-1-phosphate uridyltransferase family. It in the C-terminal section; belongs to the transferase hexapeptide repeat family. In terms of assembly, homotrimer. Requires Mg(2+) as cofactor.

It is found in the cytoplasm. The catalysed reaction is alpha-D-glucosamine 1-phosphate + acetyl-CoA = N-acetyl-alpha-D-glucosamine 1-phosphate + CoA + H(+). It catalyses the reaction N-acetyl-alpha-D-glucosamine 1-phosphate + UTP + H(+) = UDP-N-acetyl-alpha-D-glucosamine + diphosphate. The protein operates within nucleotide-sugar biosynthesis; UDP-N-acetyl-alpha-D-glucosamine biosynthesis; N-acetyl-alpha-D-glucosamine 1-phosphate from alpha-D-glucosamine 6-phosphate (route II): step 2/2. It functions in the pathway nucleotide-sugar biosynthesis; UDP-N-acetyl-alpha-D-glucosamine biosynthesis; UDP-N-acetyl-alpha-D-glucosamine from N-acetyl-alpha-D-glucosamine 1-phosphate: step 1/1. It participates in bacterial outer membrane biogenesis; LPS lipid A biosynthesis. Catalyzes the last two sequential reactions in the de novo biosynthetic pathway for UDP-N-acetylglucosamine (UDP-GlcNAc). The C-terminal domain catalyzes the transfer of acetyl group from acetyl coenzyme A to glucosamine-1-phosphate (GlcN-1-P) to produce N-acetylglucosamine-1-phosphate (GlcNAc-1-P), which is converted into UDP-GlcNAc by the transfer of uridine 5-monophosphate (from uridine 5-triphosphate), a reaction catalyzed by the N-terminal domain. In Campylobacter curvus (strain 525.92), this protein is Bifunctional protein GlmU.